The primary structure comprises 212 residues: Uridine kinase (212 aa).

13–20 (GGSGSGKT) contributes to the ATP binding site.

This sequence belongs to the uridine kinase family.

Its subcellular location is the cytoplasm. The catalysed reaction is uridine + ATP = UMP + ADP + H(+). The enzyme catalyses cytidine + ATP = CMP + ADP + H(+). It functions in the pathway pyrimidine metabolism; CTP biosynthesis via salvage pathway; CTP from cytidine: step 1/3. The protein operates within pyrimidine metabolism; UMP biosynthesis via salvage pathway; UMP from uridine: step 1/1. This is Uridine kinase from Bacillus mycoides (strain KBAB4) (Bacillus weihenstephanensis).